Reading from the N-terminus, the 236-residue chain is Small ribosomal subunit protein uS2c (236 aa).

It belongs to the universal ribosomal protein uS2 family.

The protein resides in the plastid. Its subcellular location is the chloroplast. This chain is Small ribosomal subunit protein uS2c (rps2), found in Carica papaya (Papaya).